Here is an 89-residue protein sequence, read N- to C-terminus: MAHKKAGGSSRNGRDSHSKRLGVKKFGGEAVIPGNIIIRQRGTTWHPGVNVGMGTDHTLFALESGAVTFNKKANGRTYVSVNPITKAAE.

The interval 1–23 (MAHKKAGGSSRNGRDSHSKRLGV) is disordered.

The protein belongs to the bacterial ribosomal protein bL27 family.

This chain is Large ribosomal subunit protein bL27, found in Mesorhizobium japonicum (strain LMG 29417 / CECT 9101 / MAFF 303099) (Mesorhizobium loti (strain MAFF 303099)).